The chain runs to 405 residues: Ubiquitin-like modifier-activating enzyme 5 (405 aa).

The tract at residues M1–E44 is disordered. The span at L7 to R24 shows a compositional bias: basic and acidic residues. ATP is bound by residues G81, D102, K125, N148, and N182. Zn(2+) contacts are provided by C224 and C227. C248 functions as the Glycyl thioester intermediate in the catalytic mechanism. Zn(2+)-binding residues include C301 and C306. A linker region spans residues A346–T377. The UFC1-binding sequence (UFC) motif lies at D390 to I405.

Belongs to the ubiquitin-activating E1 family. UBA5 subfamily. In terms of assembly, homodimer; homodimerization is required for UFM1 activation. Interacts (via UIS motif) with UFM1; binds UFM1 via a trans-binding mechanism in which UFM1 interacts with distinct sites in both subunits of the UBA5 homodimer. Interacts (via C-terminus) with UFC1.

Its subcellular location is the cytoplasm. It is found in the nucleus. It localises to the endoplasmic reticulum membrane. The protein localises to the golgi apparatus. Its function is as follows. E1-like enzyme which specifically catalyzes the first step in ufmylation. Activates UFM1 by first adenylating its C-terminal glycine residue with ATP, and thereafter linking this residue to the side chain of a cysteine residue in E1, yielding a UFM1-E1 thioester and free AMP. Activates UFM1 via a trans-binding mechanism, in which UFM1 interacts with distinct sites in both subunits of the UBA5 homodimer. Trans-binding also promotes stabilization of the UBA5 homodimer, and enhances ATP-binding. Transfer of UFM1 from UBA5 to the E2-like enzyme UFC1 also takes place using a trans mechanism. This Branchiostoma floridae (Florida lancelet) protein is Ubiquitin-like modifier-activating enzyme 5.